Here is a 148-residue protein sequence, read N- to C-terminus: uncharacterized protein (148 aa).

The span at 36-45 (PGAPSAGPMS) shows a compositional bias: low complexity. Positions 36-148 (PGAPSAGPMS…SGTAFFPGTT (113 aa)) are disordered. The segment covering 46 to 55 (DSNSKGSTPR) has biased composition (polar residues).

This is an uncharacterized protein from Bovine leukemia virus (isolate Japanese BLV-1) (BLV).